The sequence spans 431 residues: tRNA(Ile)-lysidine synthase (431 aa).

Serine 20–serine 25 is an ATP binding site.

The protein belongs to the tRNA(Ile)-lysidine synthase family.

It is found in the cytoplasm. The enzyme catalyses cytidine(34) in tRNA(Ile2) + L-lysine + ATP = lysidine(34) in tRNA(Ile2) + AMP + diphosphate + H(+). In terms of biological role, ligates lysine onto the cytidine present at position 34 of the AUA codon-specific tRNA(Ile) that contains the anticodon CAU, in an ATP-dependent manner. Cytidine is converted to lysidine, thus changing the amino acid specificity of the tRNA from methionine to isoleucine. This chain is tRNA(Ile)-lysidine synthase, found in Escherichia coli O157:H7.